The sequence spans 947 residues: MSEMVDLKEFLAELGKTQKELKNVIEQAKDIGLELKTNSKMTPEQAGKLYKYIVDGIKEQIQANQPAKNPEQDNKDDLNTAVASKSLNKKVFKTPKKEETKSQPKPKKTKEKKKEAPTPIAKKKGGIEIVNTFEDQTPPVENAPKVVSHSQIEKAKQKLQEIQKSREALNKLTQSNANNANSTNNANNAKKEISEVKKQEQEIKRHENIKRRTGFRVIKRNDETENETENSVTESKKPTQSAAAIFEDIKKEWQEKDKQEAKKVKKPSKPKATPTAKNNKSHKIDFSDARDFKGNDIYDDETDEILLFDLHEQDNLNKEEEEKEIRQNINDRVRVQRKNPWMNESGIKRQSKKKRAFRNDNSQKVIQSAIAIPEEVRVYEFAQKANLNLADVIKTLFNLGLMVTKNDFLDKDSIEILAEEFHLEISVQNTLEEFEVEEVLEGVKKERPPVVTIMGHVDHGKTSLLDKIRDKRVAHTEAGGITQHIGAYMVEKNNKWVSFIDTPGHEAFSQMRNRGAQVTDIAVIVIAADDGVKQQTIEALEHAKAANVPVIFAMNKMDKPNVNPDKLKAECAELGYNPVDWGGEHEFIPVSAKTGDGIDNLLETILIQADIMELKAIEEGSARAVVLEGSVEKGRGAVATVIVQSGTLSVGDSFFAETAFGKVRTMTDDQGKSIQNLKPSMVALITGLSEVPPAGSVLIGVENDSIARLQAQKRATYLHQKALSKSTKVSFDELSEMVANKELKNIPVVIKADTQGSLEAIKNSLLELNNEEVAIQVIHSGVGGITENDLSLVSNSEHAVILGFNIRPTGNVKNKAKEYNVSIKTYTVIYALIEEMRSLLLGLMSPIIEEEHTGQAEVRETFNIPKVGTIAGCVVSDGVIARGIKARLIRDGVVIHTGEILSLKRFKDDVKEVSKGYECGIMLDNYNEIKVGDVFETYKEIHKKRTL.

Positions Ile61–Ile284 are disordered. Basic and acidic residues predominate over residues Gln151–Leu169. Low complexity predominate over residues Ser175–Asn188. Positions Ala189–His206 are enriched in basic and acidic residues. Residues Glu207–Ile218 show a composition bias toward basic residues. Over residues Glu247–Lys262 the composition is skewed to basic and acidic residues. The 170-residue stretch at Glu446–Lys615 folds into the tr-type G domain. Positions Gly455 to Thr462 are G1. Position 455-462 (Gly455–Thr462) interacts with GTP. The interval Gly480–His484 is G2. A G3 region spans residues Asp501–Gly504. Residues Asp501–His505 and Asn555–Asp558 each bind GTP. The interval Asn555–Asp558 is G4. Positions Ser591 to Lys593 are G5.

Belongs to the TRAFAC class translation factor GTPase superfamily. Classic translation factor GTPase family. IF-2 subfamily.

It localises to the cytoplasm. One of the essential components for the initiation of protein synthesis. Protects formylmethionyl-tRNA from spontaneous hydrolysis and promotes its binding to the 30S ribosomal subunits. Also involved in the hydrolysis of GTP during the formation of the 70S ribosomal complex. The polypeptide is Translation initiation factor IF-2 (Helicobacter pylori (strain P12)).